Reading from the N-terminus, the 882-residue chain is DNA mismatch repair protein MutS (882 aa).

629–636 is an ATP binding site; it reads GPNMGGKS.

This sequence belongs to the DNA mismatch repair MutS family.

Its function is as follows. This protein is involved in the repair of mismatches in DNA. It is possible that it carries out the mismatch recognition step. This protein has a weak ATPase activity. The protein is DNA mismatch repair protein MutS of Ralstonia nicotianae (strain ATCC BAA-1114 / GMI1000) (Ralstonia solanacearum).